The sequence spans 340 residues: Protein arginine N-methyltransferase 1 (340 aa).

An SAM-dependent MTase PRMT-type domain is found at 16–311 (KDYYFDSYSH…TCKPAEGNHR (296 aa)). Tyr-19 is subject to Phosphotyrosine. S-adenosyl-L-methionine is bound by residues His-29, Arg-38, Gly-62, Asp-84, and Glu-113. Residues Glu-128 and Glu-137 contribute to the active site. Ser-176 bears the Phosphoserine mark.

It belongs to the class I-like SAM-binding methyltransferase superfamily. Protein arginine N-methyltransferase family. Interacts with pab2.

It localises to the nucleus. The enzyme catalyses L-arginyl-[protein] + S-adenosyl-L-methionine = N(omega)-methyl-L-arginyl-[protein] + S-adenosyl-L-homocysteine + H(+). It carries out the reaction L-arginyl-[protein] + 2 S-adenosyl-L-methionine = N(omega),N(omega)-dimethyl-L-arginyl-[protein] + 2 S-adenosyl-L-homocysteine + 2 H(+). In terms of biological role, S-adenosyl-L-methionine-dependent protein-arginine N-methyltransferase that catalyzes both the mono- and asymmetric (type I) dimethylation of the guanidino nitrogens of arginine residues in target proteins. Asymmetrically dimethylates the polyadenylate-binding protein pab2, modulating pab2 oligomerization. The chain is Protein arginine N-methyltransferase 1 from Schizosaccharomyces pombe (strain 972 / ATCC 24843) (Fission yeast).